A 317-amino-acid chain; its full sequence is UV DNA damage endonuclease (317 aa).

It belongs to the uve1/UvsE family.

Its function is as follows. Component in a DNA repair pathway. Removal of UV LIGHT damaged nucleotides. Recognizes pyrimidine dimers and cleave a phosphodiester bond immediately 5' to the lesion. In Bacillus thuringiensis subsp. konkukian (strain 97-27), this protein is UV DNA damage endonuclease.